The chain runs to 359 residues: Fructose-bisphosphate aldolase (359 aa).

Serine 50 lines the D-glyceraldehyde 3-phosphate pocket. The active-site Proton donor is aspartate 83. Zn(2+) contacts are provided by histidine 84, aspartate 105, glutamate 142, and histidine 198. Dihydroxyacetone phosphate is bound at residue glycine 199. Histidine 232 serves as a coordination point for Zn(2+). Residues 233-235 (GSS) and 275-278 (NIDT) each bind dihydroxyacetone phosphate.

Zn(2+) is required as a cofactor.

It carries out the reaction beta-D-fructose 1,6-bisphosphate = D-glyceraldehyde 3-phosphate + dihydroxyacetone phosphate. Its pathway is carbohydrate degradation; glycolysis; D-glyceraldehyde 3-phosphate and glycerone phosphate from D-glucose: step 4/4. Functionally, catalyzes the aldol condensation of dihydroxyacetone phosphate (DHAP or glycerone-phosphate) with glyceraldehyde 3-phosphate (G3P) to form fructose 1,6-bisphosphate (FBP) in gluconeogenesis and the reverse reaction in glycolysis. The protein is Fructose-bisphosphate aldolase of Nostoc sp. (strain PCC 7120 / SAG 25.82 / UTEX 2576).